Reading from the N-terminus, the 139-residue chain is NAD(P) transhydrogenase subunit alpha part 2 (139 aa).

A run of 3 helical transmembrane segments spans residues 49–69 (FWWL…VVWS), 78–98 (LMGV…IATG), and 107–127 (VLGF…FIVT).

Complex of an alpha and a beta chain; in Rhodospirillum, the alpha chain seems to be made of two subunits.

Its subcellular location is the cell inner membrane. It catalyses the reaction NAD(+) + NADPH + H(+)(in) = NADH + NADP(+) + H(+)(out). In terms of biological role, the transhydrogenation between NADH and NADP is coupled to respiration and ATP hydrolysis and functions as a proton pump across the membrane. In Rhodospirillum rubrum (strain ATCC 11170 / ATH 1.1.1 / DSM 467 / LMG 4362 / NCIMB 8255 / S1), this protein is NAD(P) transhydrogenase subunit alpha part 2 (pntAB).